The following is a 195-amino-acid chain: Small ribosomal subunit protein uS7 (195 aa).

It belongs to the universal ribosomal protein uS7 family. Part of the 30S ribosomal subunit.

In terms of biological role, one of the primary rRNA binding proteins, it binds directly to 16S rRNA where it nucleates assembly of the head domain of the 30S subunit. Is located at the subunit interface close to the decoding center. This chain is Small ribosomal subunit protein uS7, found in Sulfolobus acidocaldarius (strain ATCC 33909 / DSM 639 / JCM 8929 / NBRC 15157 / NCIMB 11770).